The sequence spans 227 residues: MAYPLQLGLQDASSPIMEELMNFHDHTLMIVFLISSLVLYLISLMLTTKLIHTSTMDAQEVETVWTILPAIILILIALPSLRILYMMDEINNPVLTVKTMGHQWYWSYEYTDFEDLSFDSYMIPTNELKPGELRQLEVDNRMVLPMELPIRMLISSEDVLHSWAVPSLGLKTDAIPGRLNQATVTSNRPGVFYGQCSEICGSNHSFMPIVLEMIPLKLFENWSLSLT.

Over Met1–Ser14 the chain is Mitochondrial intermembrane. A helical membrane pass occupies residues Pro15–Met45. Residues Leu46–Gln59 lie on the Mitochondrial matrix side of the membrane. A helical membrane pass occupies residues Glu60–Met87. Residues Asp88–Thr227 are Mitochondrial intermembrane-facing. His161, Cys196, Glu198, Cys200, His204, and Met207 together coordinate Cu cation. Position 198 (Glu198) interacts with Mg(2+).

The protein belongs to the cytochrome c oxidase subunit 2 family. As to quaternary structure, component of the cytochrome c oxidase (complex IV, CIV), a multisubunit enzyme composed of 14 subunits. The complex is composed of a catalytic core of 3 subunits MT-CO1, MT-CO2 and MT-CO3, encoded in the mitochondrial DNA, and 11 supernumerary subunits COX4I, COX5A, COX5B, COX6A, COX6B, COX6C, COX7A, COX7B, COX7C, COX8 and NDUFA4, which are encoded in the nuclear genome. The complex exists as a monomer or a dimer and forms supercomplexes (SCs) in the inner mitochondrial membrane with NADH-ubiquinone oxidoreductase (complex I, CI) and ubiquinol-cytochrome c oxidoreductase (cytochrome b-c1 complex, complex III, CIII), resulting in different assemblies (supercomplex SCI(1)III(2)IV(1) and megacomplex MCI(2)III(2)IV(2)). Found in a complex with TMEM177, COA6, COX18, COX20, SCO1 and SCO2. Interacts with TMEM177 in a COX20-dependent manner. Interacts with COX20. Interacts with COX16. Cu cation serves as cofactor.

The protein resides in the mitochondrion inner membrane. The catalysed reaction is 4 Fe(II)-[cytochrome c] + O2 + 8 H(+)(in) = 4 Fe(III)-[cytochrome c] + 2 H2O + 4 H(+)(out). In terms of biological role, component of the cytochrome c oxidase, the last enzyme in the mitochondrial electron transport chain which drives oxidative phosphorylation. The respiratory chain contains 3 multisubunit complexes succinate dehydrogenase (complex II, CII), ubiquinol-cytochrome c oxidoreductase (cytochrome b-c1 complex, complex III, CIII) and cytochrome c oxidase (complex IV, CIV), that cooperate to transfer electrons derived from NADH and succinate to molecular oxygen, creating an electrochemical gradient over the inner membrane that drives transmembrane transport and the ATP synthase. Cytochrome c oxidase is the component of the respiratory chain that catalyzes the reduction of oxygen to water. Electrons originating from reduced cytochrome c in the intermembrane space (IMS) are transferred via the dinuclear copper A center (CU(A)) of subunit 2 and heme A of subunit 1 to the active site in subunit 1, a binuclear center (BNC) formed by heme A3 and copper B (CU(B)). The BNC reduces molecular oxygen to 2 water molecules using 4 electrons from cytochrome c in the IMS and 4 protons from the mitochondrial matrix. In Taterillus emini (Emin's gerbil), this protein is Cytochrome c oxidase subunit 2 (MT-CO2).